Here is a 416-residue protein sequence, read N- to C-terminus: Choline/ethanolaminephosphotransferase 1 (416 aa).

The interval 1 to 20 (MSGHRSTRKRCGDSHPESPV) is disordered. Position 18 is a phosphoserine (Ser18). Phosphothreonine is present on Thr40. A CDP-choline-binding site is contributed by Asn86. 2 helical membrane passes run 89–108 (TIIG…FYCP) and 116–133 (LWAY…QSLD). Asp133 provides a ligand contact to Mg(2+). Asn144 carries an N-linked (GlcNAc...) asparagine glycan. Glu151 lines the CDP-choline pocket. Asp154 is a Mg(2+) binding site. His155 serves as the catalytic Proton acceptor. 8 helical membrane passes run 156-176 (GCDS…VQLG), 180-199 (DWMF…AHWQ), 210-230 (IIDV…AVIG), 246-267 (MKLF…NYFR), 286-306 (VLSP…IYKK), 315-334 (HPCL…TNKL), 349-363 (TAFI…DQYF), and 368-388 (DEYI…IRYC). Asp158 serves as a coordination point for Mg(2+).

It belongs to the CDP-alcohol phosphatidyltransferase class-I family. As to quaternary structure, homodimer. Requires Mg(2+) as cofactor. Mn(2+) serves as cofactor.

It is found in the endoplasmic reticulum membrane. It localises to the nucleus membrane. The catalysed reaction is CDP-ethanolamine + a 1,2-diacyl-sn-glycerol = a 1,2-diacyl-sn-glycero-3-phosphoethanolamine + CMP + H(+). It carries out the reaction CDP-choline + a 1,2-diacyl-sn-glycerol = a 1,2-diacyl-sn-glycero-3-phosphocholine + CMP + H(+). It catalyses the reaction 1-O-alkyl-2-acyl-sn-glycerol + CDP-choline = a 1-O-alkyl-2-acyl-sn-glycero-3-phosphocholine + CMP + H(+). The enzyme catalyses a 1-O-(1Z-alkenyl)-2-acyl-sn-glycerol + CDP-choline = a 1-O-(1Z-alkenyl)-2-acyl-sn-glycero-3-phosphocholine + CMP + H(+). The catalysed reaction is 1,2-dioctanoyl-sn-glycerol + CDP-choline = 1,2-dioctanoyl-sn-glycero-3-phosphocholine + CMP + H(+). It carries out the reaction 1,2-didecanoyl-sn-glycerol + CDP-choline = 1,2-didecanoyl-sn-glycero-3-phosphocholine + CMP + H(+). It catalyses the reaction CDP-choline + 1,2-di-(9Z-octadecenoyl)-sn-glycerol = 1,2-di-(9Z-octadecenoyl)-sn-glycero-3-phosphocholine + CMP + H(+). The enzyme catalyses 1-hexadecanoyl-2-(9Z-octadecenoyl)-sn-glycerol + CDP-choline = 1-hexadecanoyl-2-(9Z-octadecenoyl)-sn-glycero-3-phosphocholine + CMP + H(+). The catalysed reaction is CDP-ethanolamine + 1,2-di-(9Z-octadecenoyl)-sn-glycerol = 1,2-di-(9Z-octadecenoyl)-sn-glycero-3-phosphoethanolamine + CMP + H(+). It carries out the reaction 1-hexadecanoyl-2-(9Z-octadecenoyl)-sn-glycerol + CDP-ethanolamine = 1-hexadecanoyl-2-(9Z-octadecenoyl)-sn-glycero-3-phosphoethanolamine + CMP + H(+). It catalyses the reaction 1-hexadecanoyl-2-(4Z,7Z,10Z,13Z,16Z,19Z-docosahexaenoyl)-sn-glycerol + CDP-choline = 1-hexadecanoyl-2-(4Z,7Z,10Z,13Z,16Z,19Z-docosahexaenoyl)-sn-glycero-3-phosphocholine + CMP + H(+). The enzyme catalyses 1,2-di-(9Z-hexadecenoyl)-sn-glycerol + CDP-choline = 1,2-di-(9Z-hexadecenoyl)-sn-glycero-3-phosphocholine + CMP + H(+). The catalysed reaction is 1,2-di-(9Z-hexadecenoyl)-sn-glycerol + CDP-ethanolamine = 1,2-di-(9Z-hexadecenoyl)-sn-glycero-3-phosphoethanolamine + CMP + H(+). It carries out the reaction 1-O-hexadecyl-2-acetyl-sn-glycerol + CDP-choline = 1-O-hexadecyl-2-acetyl-sn-glycero-3-phosphocholine + CMP + H(+). It catalyses the reaction 1-O-hexadecyl-2-(5Z,8Z,11Z,14Z-eicosatetraenoyl)-sn-glycerol + CDP-choline = 1-O-hexadecyl-2-(5Z,8Z,11Z,14Z)-eicosatetraenoyl-sn-glycero-3-phosphocholine + CMP + H(+). Its pathway is phospholipid metabolism; phosphatidylethanolamine biosynthesis; phosphatidylethanolamine from ethanolamine: step 3/3. It participates in phospholipid metabolism; phosphatidylcholine biosynthesis; phosphatidylcholine from phosphocholine: step 2/2. Its function is as follows. Catalyzes both phosphatidylcholine and phosphatidylethanolamine biosynthesis from CDP-choline and CDP-ethanolamine, respectively. Involved in protein-dependent process of phospholipid transport to distribute phosphatidyl choline to the lumenal surface. Has a higher cholinephosphotransferase activity than ethanolaminephosphotransferase activity. This Rattus norvegicus (Rat) protein is Choline/ethanolaminephosphotransferase 1.